Reading from the N-terminus, the 564-residue chain is Probable metalloprotease ARX1 (564 aa).

The protein belongs to the peptidase M24 family. In terms of assembly, component of the nucleoplasmic and cytoplasmic pre-60S ribosomal particles.

It is found in the cytoplasm. The protein resides in the nucleus. In terms of biological role, probable metalloprotease involved in proper assembly of pre-ribosomal particles during the biogenesis of the 60S ribosomal subunit. Accompanies the pre-60S particles to the cytoplasm. This Candida albicans (strain SC5314 / ATCC MYA-2876) (Yeast) protein is Probable metalloprotease ARX1 (ARX1).